Consider the following 708-residue polypeptide: Metabotropic glutamate receptor-like protein L (708 aa).

Residues Met-1–Cys-24 form the signal peptide. Residues Asn-21, Asn-235, Asn-310, and Asn-366 are each glycosylated (N-linked (GlcNAc...) asparagine). Over Asp-25–Met-370 the chain is Extracellular. Residues Ala-371 to Phe-391 traverse the membrane as a helical segment. The Cytoplasmic portion of the chain corresponds to Ser-392–Thr-401. A helical transmembrane segment spans residues Ile-402 to Trp-422. The Extracellular portion of the chain corresponds to Asn-423–Lys-435. A helical membrane pass occupies residues Ile-436–Leu-456. Over Ile-457 to Arg-479 the chain is Cytoplasmic. The chain crosses the membrane as a helical span at residues Ile-480–Thr-500. Residues Ser-501–Asp-531 are Extracellular-facing. A glycan (N-linked (GlcNAc...) asparagine) is linked at Asn-527. A helical transmembrane segment spans residues Ile-532 to Ala-552. The Cytoplasmic segment spans residues Trp-553–Asp-568. Residues Phe-569 to Gly-589 traverse the membrane as a helical segment. Residues Val-590 to Asn-597 lie on the Extracellular side of the membrane. A helical membrane pass occupies residues Thr-598–Ala-618. Residues Lys-619–Asn-708 lie on the Cytoplasmic side of the membrane. The tract at residues Lys-638–Gln-681 is disordered. The span at Val-669–Gln-681 shows a compositional bias: polar residues.

The protein in the N-terminal section; belongs to the BMP lipoprotein family. It in the C-terminal section; belongs to the G-protein coupled receptor 3 family. GABA-B receptor subfamily.

It localises to the membrane. The polypeptide is Metabotropic glutamate receptor-like protein L (far1) (Dictyostelium discoideum (Social amoeba)).